Reading from the N-terminus, the 221-residue chain is Prolactin-3B1 (221 aa).

Positions 1–30 (MQLPLTPLSFSGTLLLMAMSNFLLWEHVTS) are cleaved as a signal peptide. Disulfide bonds link Cys-81–Cys-196 and Cys-213–Cys-221.

Belongs to the somatotropin/prolactin family.

It is found in the secreted. The protein is Prolactin-3B1 (PRL3B1) of Mesocricetus auratus (Golden hamster).